The chain runs to 335 residues: Transmembrane protein 120B-A (335 aa).

The stretch at 1 to 40 forms a coiled coil; that stretch reads MSLQKCQEEWSEIEKEFQQLQETHKVYKQKLEELNSLQNL. 6 helical membrane passes run 100–122, 130–150, 157–177, 193–213, 268–288, and 300–320; these read GLYL…AKFA, FKLY…FVLN, VFNF…SILI, VSTF…YQIF, FLLP…ITLF, and QVFV…LTTL.

This sequence belongs to the TMEM120 family.

Its subcellular location is the nucleus inner membrane. Its function is as follows. Necessary for efficient adipogenesis. Does not show ion channel activity. The sequence is that of Transmembrane protein 120B-A (tmem120b-a) from Xenopus laevis (African clawed frog).